Consider the following 372-residue polypeptide: Protein phosphatase Mn(2+)-dependent 1K (372 aa).

The N-terminal 29 residues, 1-29 (MLSTAFITLVRSGRNQVKKRVLLSSILLQ), are a transit peptide targeting the mitochondrion. The critical for association with the BCKDH complex stretch occupies residues 46–61 (RCSRFDPDGSGQPATW). The PPM-type phosphatase domain maps to 94-346 (NVGCASLIGK…DNSTAVVVPF (253 aa)). Aspartate 127 and glycine 128 together coordinate Mn(2+). Serine 248 bears the Phosphoserine mark. Mn(2+) contacts are provided by aspartate 298 and aspartate 337.

Belongs to the PP2C family. As to quaternary structure, interacts with E1 and E2 components of the branched-chain alpha-ketoacid dehydrogenase (BCKDH) complex. Interacts with both BCKDHA and BCKDHB chains of the E1 subunit. Interacts with the 24-meric DBT/E2 core of the BCKD complex with a 1:1 stoichiometry; the N-terminal region (residues 49-61) of PPM1K and C-terminal linker of the lipoyl domain of DBT/E2 (residues 145-160) are critical for this interaction whereas the lipoyl prosthetic group is dispensable. Competes with BCKDK for binding to DBT/E2; this interaction is modulated by branched-chain alpha-keto acids (BCKAs). At steady state, BCKDH holoenzyme preferentially binds BCKDK and BCKDHA/E1 is phosphorylated. In response to high levels of BCKAs, BCKDK is replaced by PPM1K leading to BCKDHA/E1 dephosphorylation. Mn(2+) serves as cofactor.

The protein localises to the mitochondrion matrix. The catalysed reaction is O-phospho-L-seryl-[3-methyl-2-oxobutanoate dehydrogenase] + H2O = L-seryl-[3-methyl-2-oxobutanoate dehydrogenase] + phosphate. The enzyme catalyses O-phospho-L-seryl-[protein] + H2O = L-seryl-[protein] + phosphate. It functions in the pathway protein modification. Functionally, serine/threonine-protein phosphatase component of macronutrients metabolism. Together with BCKDK serves as a metabolic regulatory node that coordinates branched-chain amino acids (BCAAs) and protein synthesis with glucose and lipid metabolism via two distinct phosphoprotein targets: BCKDHA/E1a subunit of the branched-chain alpha-ketoacid dehydrogenase (BCKDH) complex and ACLY, a lipogenic enzyme of Krebs cycle. At high levels of branched-chain ketoacids (BCKAs), dephosphorylates and activates mitochondrial BCKDH complex, a multisubunit complex consisting of three components, heterotetrameric E1 composed of BCKDHA and BCKDHB chains, 24-meric E2 core composed of DBT and homodimeric E3 composed of DLD, each involved in different steps of BCAA catabolism. Tightly associates with the E2 subunit of BCKDH complex and dephosphorylates Ser-333 of BCKDHA chain of the E1 subunit likely through on-off binding to individual E2 subunits of the 24-meric E2 core to increase the efficiency of the dephosphorylation reaction. Appears to dephosphorylate and inactivate cytosolic ACLY in response to changes of cellular carbohydrate abundance. Overnutrition and in particular high-fructose diet, activates MLXIPL/ChREBP leading to increased BCKDK to PPM1K ratio, phosphorylation of ACLY on Ser-454 and activation of its enzymatic activity that ultimately results in the generation of acetyl-CoA and malonyl-CoA immediate substrates of de novo lipogenesis. Recognizes phosphosites having SxS or RxxS motifs and strictly depends on Mn(2+) ions for the phosphatase activity. Regulates Ca(2+)-induced opening of mitochondrial transition pore and apoptotic cell death. This Rattus norvegicus (Rat) protein is Protein phosphatase Mn(2+)-dependent 1K (Ppm1k).